We begin with the raw amino-acid sequence, 143 residues long: Nucleoside diphosphate kinase (143 aa).

6 residues coordinate ATP: K11, F59, R87, T93, R104, and N114. H117 acts as the Pros-phosphohistidine intermediate in catalysis.

The protein belongs to the NDK family. In terms of assembly, homotetramer. Mg(2+) is required as a cofactor.

Its subcellular location is the cytoplasm. The enzyme catalyses a 2'-deoxyribonucleoside 5'-diphosphate + ATP = a 2'-deoxyribonucleoside 5'-triphosphate + ADP. The catalysed reaction is a ribonucleoside 5'-diphosphate + ATP = a ribonucleoside 5'-triphosphate + ADP. In terms of biological role, major role in the synthesis of nucleoside triphosphates other than ATP. The ATP gamma phosphate is transferred to the NDP beta phosphate via a ping-pong mechanism, using a phosphorylated active-site intermediate. This is Nucleoside diphosphate kinase from Shewanella halifaxensis (strain HAW-EB4).